A 199-amino-acid chain; its full sequence is Cytochrome c oxidase subunit 2 (199 aa).

A helical membrane pass occupies residues 1-13 (AICSLVLYLLSLM). Topologically, residues 14 to 26 (LMEKLSSNTVDAQ) are mitochondrial matrix. Residues 27 to 54 (EVELIWTILPAIVLILLALPSLQILYMM) traverse the membrane as a helical segment. Residues 55–199 (DEIDEPDLTL…SSLLSSSSSL (145 aa)) are Mitochondrial intermembrane-facing. 6 residues coordinate Cu cation: histidine 128, cysteine 163, glutamate 165, cysteine 167, histidine 171, and methionine 174. Glutamate 165 serves as a coordination point for Mg(2+).

It belongs to the cytochrome c oxidase subunit 2 family. As to quaternary structure, component of the cytochrome c oxidase (complex IV, CIV), a multisubunit enzyme composed of 14 subunits. The complex is composed of a catalytic core of 3 subunits MT-CO1, MT-CO2 and MT-CO3, encoded in the mitochondrial DNA, and 11 supernumerary subunits COX4I, COX5A, COX5B, COX6A, COX6B, COX6C, COX7A, COX7B, COX7C, COX8 and NDUFA4, which are encoded in the nuclear genome. The complex exists as a monomer or a dimer and forms supercomplexes (SCs) in the inner mitochondrial membrane with NADH-ubiquinone oxidoreductase (complex I, CI) and ubiquinol-cytochrome c oxidoreductase (cytochrome b-c1 complex, complex III, CIII), resulting in different assemblies (supercomplex SCI(1)III(2)IV(1) and megacomplex MCI(2)III(2)IV(2)). Found in a complex with TMEM177, COA6, COX18, COX20, SCO1 and SCO2. Interacts with TMEM177 in a COX20-dependent manner. Interacts with COX20. Interacts with COX16. Requires Cu cation as cofactor.

The protein localises to the mitochondrion inner membrane. It catalyses the reaction 4 Fe(II)-[cytochrome c] + O2 + 8 H(+)(in) = 4 Fe(III)-[cytochrome c] + 2 H2O + 4 H(+)(out). Its function is as follows. Component of the cytochrome c oxidase, the last enzyme in the mitochondrial electron transport chain which drives oxidative phosphorylation. The respiratory chain contains 3 multisubunit complexes succinate dehydrogenase (complex II, CII), ubiquinol-cytochrome c oxidoreductase (cytochrome b-c1 complex, complex III, CIII) and cytochrome c oxidase (complex IV, CIV), that cooperate to transfer electrons derived from NADH and succinate to molecular oxygen, creating an electrochemical gradient over the inner membrane that drives transmembrane transport and the ATP synthase. Cytochrome c oxidase is the component of the respiratory chain that catalyzes the reduction of oxygen to water. Electrons originating from reduced cytochrome c in the intermembrane space (IMS) are transferred via the dinuclear copper A center (CU(A)) of subunit 2 and heme A of subunit 1 to the active site in subunit 1, a binuclear center (BNC) formed by heme A3 and copper B (CU(B)). The BNC reduces molecular oxygen to 2 water molecules using 4 electrons from cytochrome c in the IMS and 4 protons from the mitochondrial matrix. The protein is Cytochrome c oxidase subunit 2 (MT-CO2) of Rhea americana (Greater rhea).